Reading from the N-terminus, the 325-residue chain is Probable 4-hydroxy-tetrahydrodipicolinate reductase 2, chloroplastic (325 aa).

Residues 1-32 constitute a chloroplast transit peptide; the sequence is MLSLRPPCTLSPAPWRRRRTLHGAAGTPQRVS. NAD(+) is bound by residues 57–62, 149–151, and 172–175; these read GCTGKM, GTT, and SPQM. Catalysis depends on H208, which acts as the Proton donor/acceptor. K212 functions as the Proton donor in the catalytic mechanism. A (S)-2,3,4,5-tetrahydrodipicolinate-binding site is contributed by 217-218; the sequence is GT.

It belongs to the DapB family.

Its subcellular location is the plastid. It is found in the chloroplast. It catalyses the reaction (S)-2,3,4,5-tetrahydrodipicolinate + NAD(+) + H2O = (2S,4S)-4-hydroxy-2,3,4,5-tetrahydrodipicolinate + NADH + H(+). The enzyme catalyses (S)-2,3,4,5-tetrahydrodipicolinate + NADP(+) + H2O = (2S,4S)-4-hydroxy-2,3,4,5-tetrahydrodipicolinate + NADPH + H(+). Its pathway is amino-acid biosynthesis; L-lysine biosynthesis via DAP pathway; (S)-tetrahydrodipicolinate from L-aspartate: step 4/4. In terms of biological role, catalyzes the conversion of 4-hydroxy-tetrahydrodipicolinate (HTPA) to tetrahydrodipicolinate. The chain is Probable 4-hydroxy-tetrahydrodipicolinate reductase 2, chloroplastic (DAPB2) from Oryza sativa subsp. japonica (Rice).